The primary structure comprises 689 residues: Protein asunder (689 aa).

Positions 521–550 form a coiled coil; it reads NGARLKLSKAKDQYRLLYRELEQLIQLNAT. Positions 578 to 619 are disordered; it reads GASLLRSYTESPLSPERLEPITSGSASGSSNSNSLLKASKRR. Positions 600-614 are enriched in low complexity; it reads SGSASGSSNSNSLLK. The Nuclear localization signal (NLS) signature appears at 613–619; sequence LKASKRR.

The protein belongs to the Integrator subunit 13 family. As to quaternary structure, belongs to the multiprotein complex Integrator, at least composed of IntS1, IntS2, IntS3, IntS4, omd/IntS5, IntS6, defl/IntS7, IntS8, IntS9, IntS10, IntS11, IntS12, asun/IntS13, IntS14 and IntS15. The core complex associates with protein phosphatase 2A subunits mts/PP2A and Pp2A-29B, to form the Integrator-PP2A (INTAC) complex. Post-translationally, phosphorylated.

The protein resides in the nucleus. It is found in the cytoplasm. It localises to the perinuclear region. In terms of biological role, component of the integrator complex, a multiprotein complex that terminates RNA polymerase II (Pol II) transcription in the promoter-proximal region of genes. The integrator complex provides a quality checkpoint during transcription elongation by driving premature transcription termination of transcripts that are unfavorably configured for transcriptional elongation: the complex terminates transcription by (1) catalyzing dephosphorylation of the C-terminal domain (CTD) of Pol II subunit Polr2A/Rbp1 and Spt5, and (2) degrading the exiting nascent RNA transcript via endonuclease activity. The integrator complex is also involved in the 3'-end processing of the U7 snRNA, and also the spliceosomal snRNAs U1, U2, U4 and U5. This is Protein asunder (asun) from Drosophila erecta (Fruit fly).